We begin with the raw amino-acid sequence, 78 residues long: Esculentin-2ISa (78 aa).

An N-terminal signal peptide occupies residues 1–22 (MFTLKKSLLLLFFLGTISLSVC). Residues 23 to 39 (KQERDADYEDKGEVEEV) constitute a propeptide, removed in mature form. Cysteines 72 and 78 form a disulfide.

In terms of tissue distribution, expressed by the skin glands.

It is found in the secreted. Functionally, has antimicrobial activity against Gram-negative bacterium E.coli ATCC 8739 (MIC=12.5 ug), against Gram positive bacteria S.aureus ATCC 6538 (MIC=3.1 ug), methicillin-resistant S.aureus ATCC 43300 (MIC=25 ug), B.subtilis ATCC 6633 (MIC=6.3 ug) and against fungus C.albicans ATCC 90028 (MIC=100 ug). The chain is Esculentin-2ISa from Odorrana ishikawae (Ishikawa's frog).